A 106-amino-acid chain; its full sequence is Iron-sulfur cluster assembly protein CyaY (106 aa).

It belongs to the frataxin family.

Involved in iron-sulfur (Fe-S) cluster assembly. May act as a regulator of Fe-S biogenesis. This Shigella flexneri serotype 5b (strain 8401) protein is Iron-sulfur cluster assembly protein CyaY.